The sequence spans 302 residues: Plant UBX domain-containing protein 3 (302 aa).

Disordered stretches follow at residues Met1–Asp64 and Val79–Leu98. The 65-residue stretch at Pro113–Pro177 folds into the SEP domain. One can recognise a UBX domain in the interval Glu224–Lys301.

As to quaternary structure, interacts with CDC48A.

The protein is Plant UBX domain-containing protein 3 of Arabidopsis thaliana (Mouse-ear cress).